The following is a 355-amino-acid chain: UDP-N-acetylglucosamine--N-acetylmuramyl-(pentapeptide) pyrophosphoryl-undecaprenol N-acetylglucosamine transferase (355 aa).

Residues 15 to 17 (TGG), asparagine 127, arginine 163, serine 191, isoleucine 244, 263 to 268 (ALTVSE), and glutamine 288 each bind UDP-N-acetyl-alpha-D-glucosamine.

It belongs to the glycosyltransferase 28 family. MurG subfamily.

The protein resides in the cell inner membrane. The catalysed reaction is di-trans,octa-cis-undecaprenyl diphospho-N-acetyl-alpha-D-muramoyl-L-alanyl-D-glutamyl-meso-2,6-diaminopimeloyl-D-alanyl-D-alanine + UDP-N-acetyl-alpha-D-glucosamine = di-trans,octa-cis-undecaprenyl diphospho-[N-acetyl-alpha-D-glucosaminyl-(1-&gt;4)]-N-acetyl-alpha-D-muramoyl-L-alanyl-D-glutamyl-meso-2,6-diaminopimeloyl-D-alanyl-D-alanine + UDP + H(+). Its pathway is cell wall biogenesis; peptidoglycan biosynthesis. Its function is as follows. Cell wall formation. Catalyzes the transfer of a GlcNAc subunit on undecaprenyl-pyrophosphoryl-MurNAc-pentapeptide (lipid intermediate I) to form undecaprenyl-pyrophosphoryl-MurNAc-(pentapeptide)GlcNAc (lipid intermediate II). This Salmonella gallinarum (strain 287/91 / NCTC 13346) protein is UDP-N-acetylglucosamine--N-acetylmuramyl-(pentapeptide) pyrophosphoryl-undecaprenol N-acetylglucosamine transferase.